A 36-amino-acid polypeptide reads, in one-letter code: Photosystem I reaction center subunit VIII (36 aa).

The chain crosses the membrane as a helical span at residues 7-29 (PSILVPLVGIIFPGISMALLFIY).

It belongs to the PsaI family.

The protein localises to the plastid. It is found in the chloroplast thylakoid membrane. May help in the organization of the PsaL subunit. The chain is Photosystem I reaction center subunit VIII from Gracilaria tenuistipitata var. liui (Red alga).